Consider the following 628-residue polypeptide: Glutamyl-tRNA(Gln) amidotransferase subunit E (628 aa).

Belongs to the GatB/GatE family. GatE subfamily. Heterodimer of GatD and GatE.

It catalyses the reaction L-glutamyl-tRNA(Gln) + L-glutamine + ATP + H2O = L-glutaminyl-tRNA(Gln) + L-glutamate + ADP + phosphate + H(+). In terms of biological role, allows the formation of correctly charged Gln-tRNA(Gln) through the transamidation of misacylated Glu-tRNA(Gln) in organisms which lack glutaminyl-tRNA synthetase. The reaction takes place in the presence of glutamine and ATP through an activated gamma-phospho-Glu-tRNA(Gln). The GatDE system is specific for glutamate and does not act on aspartate. This Sulfurisphaera tokodaii (strain DSM 16993 / JCM 10545 / NBRC 100140 / 7) (Sulfolobus tokodaii) protein is Glutamyl-tRNA(Gln) amidotransferase subunit E.